The sequence spans 427 residues: MIRNLTLLSKSSLDPKCLILKHSNKNLNNYFKQITFRYYSKTNPIIKQQNHNNINNYNNTTPETQERINELLKLFPPIKYGFAYGSGVISQKGYNRNGDGSTSTENPSKKEEQSPMIDLIFAVENSTKWHSLNLVNNQSHYSFLGLMGAHIVAKVQYMNAKIYFNTLLEHNGIKFKYGVIEYKDLIDDLKNWKTLYLSGRMQKPIFNLPTSSTEGLKEIQEINSEYNLKNAVITSLLMLPETFTEYDLYHTISKLSYSGDIRMKGAENPMKTHNIVINNIDGFRSLYFPIINDHLTQYLNVILENGDEVNSSLILSQNNNNKNNNKNETTTTAAPKMVTFKSKQDPMNYLNLLMMLPGSIKSTMLKEVRNNMKLMKSDEKIDPTILHNLIFMIVSKSSFAQTVKGVFTAGISKSLNYMKLKLKKNKK.

Residues Y94–N106 show a composition bias toward polar residues. The tract at residues Y94 to Q113 is disordered.

It belongs to the TAM41 family. The cofactor is Mg(2+).

Its subcellular location is the mitochondrion inner membrane. It catalyses the reaction a 1,2-diacyl-sn-glycero-3-phosphate + CTP + H(+) = a CDP-1,2-diacyl-sn-glycerol + diphosphate. Its pathway is phospholipid metabolism; CDP-diacylglycerol biosynthesis; CDP-diacylglycerol from sn-glycerol 3-phosphate: step 3/3. Functionally, catalyzes the formation of CDP-diacylglycerol (CDP-DAG) from phosphatidic acid (PA) in the mitochondrial inner membrane. Required for the biosynthesis of the dimeric phospholipid cardiolipin, which stabilizes supercomplexes of the mitochondrial respiratory chain in the mitochondrial inner membrane. This Dictyostelium discoideum (Social amoeba) protein is Phosphatidate cytidylyltransferase, mitochondrial.